The primary structure comprises 58 residues: Small ribosomal subunit protein bS21 (58 aa).

Belongs to the bacterial ribosomal protein bS21 family.

This is Small ribosomal subunit protein bS21 from Lactobacillus johnsonii (strain CNCM I-12250 / La1 / NCC 533).